Consider the following 432-residue polypeptide: MQVTVETLEGLERRLNITVPAANIEDAVTAELRNIAKNRRFDGFRKGKVPMKMVAKMYGKAVRQDILGEVMQRHFIEAIIKEKINPAGAPTFAPVENKEGSDLVFNATFEVYPEVELKGLENITVEKPAVEVKDADVEEMIETLRKQQATWTEVEEAAEAGKRVSIDFVGSIDGEEFEGGKAENFPLEMGAGRMIPGFEDGIEGKTKGMEFEIDVTFPEDYHAENLKGKAAKFAIKVNKVEARQLPELNDEFVAKFGVAEGGIDALKAEVRKNMERELKQAVKNRIKEQAIDGLVKENEIDVPAALIDQEINVLRQQAAQRFGGNVEAAMQLPRELFEEQAKRRVVVGLLLGEVIKAHELKVDEEKVKAIITEMATAYEDPTEVVTYYEQNEQMMNNMRNVALEEQAIDAIIAKAQVSEKEVSFNELMNQPA.

The PPIase FKBP-type domain maps to 161 to 246 (GKRVSIDFVG…VNKVEARQLP (86 aa)).

Belongs to the FKBP-type PPIase family. Tig subfamily.

It is found in the cytoplasm. The enzyme catalyses [protein]-peptidylproline (omega=180) = [protein]-peptidylproline (omega=0). In terms of biological role, involved in protein export. Acts as a chaperone by maintaining the newly synthesized protein in an open conformation. Functions as a peptidyl-prolyl cis-trans isomerase. The sequence is that of Trigger factor from Vibrio vulnificus (strain YJ016).